The sequence spans 156 residues: RING finger protein 224 (156 aa).

The segment at 24–71 (CIICCSAYDLSGHLPRRLYCGHTFCQACVRRLDTPAPEQRWIPCPQCR) adopts an RING-type zinc-finger fold.

This chain is RING finger protein 224 (RNF224), found in Homo sapiens (Human).